An 84-amino-acid chain; its full sequence is CDC42 small effector protein 2 (84 aa).

Residues Cys10 and Cys11 are each lipidated (S-palmitoyl cysteine). Residues Ile29 to Gly42 form the CRIB domain. A phosphoserine mark is found at Ser43 and Ser52.

This sequence belongs to the CDC42SE/SPEC family. In terms of assembly, interacts with CDC42 (in GTP-bound form). Interacts weakly with RAC1 and not at all with RHOA. Widely expressed. Expressed at higher level in T-lymphocytes. Highly expressed in CCRF-CEM T-lymphocytes, Jurkat T-lymphocytes, and Raji B-lymphocytes compared (at protein level).

The protein resides in the cytoplasm. It localises to the cytoskeleton. It is found in the cell membrane. Its subcellular location is the cell projection. The protein localises to the phagocytic cup. In terms of biological role, probably involved in the organization of the actin cytoskeleton by acting downstream of CDC42, inducing actin filament assembly. Alters CDC42-induced cell shape changes. In activated T-cells, may play a role in CDC42-mediated F-actin accumulation at the immunological synapse. May play a role in early contractile events in phagocytosis in macrophages. This chain is CDC42 small effector protein 2 (CDC42SE2), found in Homo sapiens (Human).